A 104-amino-acid polypeptide reads, in one-letter code: uncharacterized protein (104 aa).

This is an uncharacterized protein from Orgyia pseudotsugata (Douglas-fir tussock moth).